Consider the following 475-residue polypeptide: Doublecortin domain-containing protein 2 (475 aa).

Doublecortin domains follow at residues 17-100 (KSVL…LNYL) and 139-221 (CTIF…LPYS). Positions 234–475 (YGQKASSLPP…ESNKASSAVA (242 aa)) are disordered. The segment covering 252–272 (GSGNYRQSKSTIGSSDNSSPQ) has biased composition (polar residues). Ser-270 carries the post-translational modification Phosphoserine. The span at 353–365 (EKTSKDANQKDDF) shows a compositional bias: basic and acidic residues. Positions 407–419 (TDEENGEELDQVT) are enriched in acidic residues. A compositionally biased stretch (polar residues) spans 455–475 (TVTSPQENEGNESNKASSAVA).

Interacts with DVL1, DVL2 and DVL3. Expressed in hair cells of the inner ear.

It is found in the cell projection. Its subcellular location is the cilium. It localises to the cytoplasm. The protein localises to the cytoskeleton. The protein resides in the cilium axoneme. It is found in the kinocilium. In terms of biological role, protein that plays a role in the inhibition of canonical Wnt signaling pathway. May be involved in neuronal migration during development of the cerebral neocortex. Involved in the control of ciliogenesis and ciliary length. This is Doublecortin domain-containing protein 2 (Dcdc2) from Rattus norvegicus (Rat).